The primary structure comprises 324 residues: Probable pectinesterase A (324 aa).

A signal peptide spans 1 to 19 (MHGSLLKLALLSFSLASSA). Q142 lines the substrate pocket. The Proton donor role is filled by D165. Residue D186 is the Nucleophile of the active site. Positions 246 and 248 each coordinate substrate. N285 is a glycosylation site (N-linked (GlcNAc...) asparagine).

The protein belongs to the pectinesterase family.

The protein resides in the secreted. It carries out the reaction [(1-&gt;4)-alpha-D-galacturonosyl methyl ester](n) + n H2O = [(1-&gt;4)-alpha-D-galacturonosyl](n) + n methanol + n H(+). Its pathway is glycan metabolism; pectin degradation; 2-dehydro-3-deoxy-D-gluconate from pectin: step 1/5. Functionally, involved in maceration and soft-rotting of plant tissue. This is Probable pectinesterase A (pmeA) from Aspergillus flavus (strain ATCC 200026 / FGSC A1120 / IAM 13836 / NRRL 3357 / JCM 12722 / SRRC 167).